The chain runs to 529 residues: UDP-glycosyltransferase (529 aa).

2 N-linked (GlcNAc...) asparagine glycosylation sites follow: Asn70 and Asn420. Residues 504–524 (LDLYLVYIALFAVPVGAVRWI) form a helical membrane-spanning segment.

It belongs to the glycosyltransferase 28 family.

The protein resides in the membrane. The enzyme catalyses stromemycin aglycone + UDP-alpha-D-glucose = stromemycin + UDP + H(+). Its pathway is mycotoxin biosynthesis. UDP-glycosyltransferase; part of the gene cluster that mediates the biosynthesis of stromemycin, a depside C-glucoside with two unsaturated C9 side chains belonging to aromatic polyketide glycosides. Acts as the tailoring enzyme responsible for 3-C-glucosylation of bininalkenylresorcylic acid to yield stromemycin. The sequence is that of UDP-glycosyltransferase from Talaromyces amestolkiae.